The chain runs to 380 residues: Succinyl-diaminopimelate desuccinylase (380 aa).

A Zn(2+)-binding site is contributed by His69. The active site involves Asp71. Asp102 is a Zn(2+) binding site. Residue Glu136 is the Proton acceptor of the active site. Residues Glu137, Glu165, and His351 each contribute to the Zn(2+) site.

It belongs to the peptidase M20A family. DapE subfamily. In terms of assembly, homodimer. It depends on Zn(2+) as a cofactor. The cofactor is Co(2+).

The catalysed reaction is N-succinyl-(2S,6S)-2,6-diaminopimelate + H2O = (2S,6S)-2,6-diaminopimelate + succinate. It functions in the pathway amino-acid biosynthesis; L-lysine biosynthesis via DAP pathway; LL-2,6-diaminopimelate from (S)-tetrahydrodipicolinate (succinylase route): step 3/3. Catalyzes the hydrolysis of N-succinyl-L,L-diaminopimelic acid (SDAP), forming succinate and LL-2,6-diaminopimelate (DAP), an intermediate involved in the bacterial biosynthesis of lysine and meso-diaminopimelic acid, an essential component of bacterial cell walls. The polypeptide is Succinyl-diaminopimelate desuccinylase (Bordetella petrii (strain ATCC BAA-461 / DSM 12804 / CCUG 43448)).